Consider the following 490-residue polypeptide: Coagulation factor X (490 aa).

The first 20 residues, Met1–Ser20, serve as a signal peptide directing secretion. Positions Gly21–Arg40 are excised as a propeptide. The Gla domain occupies Ala41–Val85. Residues Glu46, Glu47, Glu54, Glu56, Glu59, and Glu60 each carry the 4-carboxyglutamate modification. A disulfide bridge connects residues Cys57 and Cys62. N-linked (GlcNAc...) asparagine glycosylation is present at Asn61. 6 positions are modified to 4-carboxyglutamate: Glu65, Glu66, Glu69, Glu72, Glu75, and Glu79. The 37-residue stretch at Asp86–Glu122 folds into the EGF-like 1; calcium-binding domain. Cystine bridges form between Cys90-Cys101, Cys95-Cys110, Cys112-Cys121, Cys129-Cys140, Cys136-Cys149, Cys151-Cys164, Cys172-Cys340, Cys239-Cys244, Cys259-Cys275, Cys388-Cys402, and Cys413-Cys441. Asp103 carries the post-translational modification (3R)-3-hydroxyaspartate. The 41-residue stretch at Thr125 to Ile165 folds into the EGF-like 2 domain. Residues Ser183–Leu230 form a disordered region. Positions Pro184–Arg232 are cleaved as a propeptide — activation peptide. Asn187 and Asn205 each carry an N-linked (GlcNAc...) asparagine glycan. Residues Asp203–Pro212 show a composition bias toward polar residues. One can recognise a Peptidase S1 domain in the interval Ile233–Arg465. Catalysis depends on charge relay system residues His274 and Asp320. Ser417 acts as the Charge relay system in catalysis.

It belongs to the peptidase S1 family. As to quaternary structure, the two chains are formed from a single-chain precursor by the excision of two Arg residues and are held together by 1 or more disulfide bonds. Forms a heterodimer with SERPINA5. In terms of processing, the vitamin K-dependent, enzymatic carboxylation of some glutamate residues allows the modified protein to bind calcium. Post-translationally, N- and O-glycosylated. Proteolytically cleaved and activated by cathepsin CTSG. The activation peptide is cleaved by factor IXa (in the intrinsic pathway), or by factor VIIa (in the extrinsic pathway). In terms of processing, the iron and 2-oxoglutarate dependent 3-hydroxylation of aspartate and asparagine is (R) stereospecific within EGF domains.

The protein resides in the secreted. It catalyses the reaction Selective cleavage of Arg-|-Thr and then Arg-|-Ile bonds in prothrombin to form thrombin.. With respect to regulation, inhibited by SERPINA5. In terms of biological role, factor Xa is a vitamin K-dependent glycoprotein that converts prothrombin to thrombin in the presence of factor Va, calcium and phospholipid during blood clotting. Factor Xa activates pro-inflammatory signaling pathways in a protease-activated receptor (PAR)-dependent manner. The sequence is that of Coagulation factor X (F10) from Oryctolagus cuniculus (Rabbit).